Here is a 236-residue protein sequence, read N- to C-terminus: Purine nucleoside phosphorylase DeoD-type 2 (236 aa).

His-5 is an a purine D-ribonucleoside binding site. Phosphate-binding positions include Gly-21, Arg-25, Arg-44, and 88-91 (RVGS). A purine D-ribonucleoside-binding positions include 180–182 (DME) and 204–205 (SD). Catalysis depends on Asp-205, which acts as the Proton donor.

The protein belongs to the PNP/UDP phosphorylase family. In terms of assembly, homohexamer; trimer of homodimers.

The catalysed reaction is a purine D-ribonucleoside + phosphate = a purine nucleobase + alpha-D-ribose 1-phosphate. It catalyses the reaction a purine 2'-deoxy-D-ribonucleoside + phosphate = a purine nucleobase + 2-deoxy-alpha-D-ribose 1-phosphate. In terms of biological role, catalyzes the reversible phosphorolytic breakdown of the N-glycosidic bond in the beta-(deoxy)ribonucleoside molecules, with the formation of the corresponding free purine bases and pentose-1-phosphate. In Photobacterium profundum (strain SS9), this protein is Purine nucleoside phosphorylase DeoD-type 2.